Here is a 265-residue protein sequence, read N- to C-terminus: 4-hydroxy-tetrahydrodipicolinate reductase (265 aa).

NAD(+) is bound by residues 7-12 (GASGRM), Asp33, 96-98 (GTT), and 120-123 (AANF). His153 serves as the catalytic Proton donor/acceptor. (S)-2,3,4,5-tetrahydrodipicolinate is bound at residue His154. Lys157 (proton donor) is an active-site residue. 163–164 (GT) is a binding site for (S)-2,3,4,5-tetrahydrodipicolinate.

It belongs to the DapB family.

It localises to the cytoplasm. It catalyses the reaction (S)-2,3,4,5-tetrahydrodipicolinate + NAD(+) + H2O = (2S,4S)-4-hydroxy-2,3,4,5-tetrahydrodipicolinate + NADH + H(+). It carries out the reaction (S)-2,3,4,5-tetrahydrodipicolinate + NADP(+) + H2O = (2S,4S)-4-hydroxy-2,3,4,5-tetrahydrodipicolinate + NADPH + H(+). Its pathway is amino-acid biosynthesis; L-lysine biosynthesis via DAP pathway; (S)-tetrahydrodipicolinate from L-aspartate: step 4/4. Catalyzes the conversion of 4-hydroxy-tetrahydrodipicolinate (HTPA) to tetrahydrodipicolinate. The protein is 4-hydroxy-tetrahydrodipicolinate reductase of Cupriavidus necator (strain ATCC 17699 / DSM 428 / KCTC 22496 / NCIMB 10442 / H16 / Stanier 337) (Ralstonia eutropha).